A 498-amino-acid chain; its full sequence is ATP synthase subunit beta, chloroplastic (498 aa).

172–179 lines the ATP pocket; sequence GGAGVGKT.

The protein belongs to the ATPase alpha/beta chains family. As to quaternary structure, F-type ATPases have 2 components, CF(1) - the catalytic core - and CF(0) - the membrane proton channel. CF(1) has five subunits: alpha(3), beta(3), gamma(1), delta(1), epsilon(1). CF(0) has four main subunits: a(1), b(1), b'(1) and c(9-12).

It is found in the plastid. The protein localises to the chloroplast thylakoid membrane. It catalyses the reaction ATP + H2O + 4 H(+)(in) = ADP + phosphate + 5 H(+)(out). Functionally, produces ATP from ADP in the presence of a proton gradient across the membrane. The catalytic sites are hosted primarily by the beta subunits. In Solanum bulbocastanum (Wild potato), this protein is ATP synthase subunit beta, chloroplastic.